A 323-amino-acid polypeptide reads, in one-letter code: Dehydrogenase/reductase SDR family member 7B (323 aa).

The Cytoplasmic portion of the chain corresponds to 1–17; sequence MISPSFRKGMLKERVMD. Residues 18 to 38 form a helical; Signal-anchor for type II membrane protein membrane-spanning segment; it reads LASQTTILPLLFGCLGIFSLF. The Lumenal portion of the chain corresponds to 39-323; it reads RLLQRIRSKA…ARKERKSKSS (285 aa). The NAD(+) site is built by Ser-62 and Leu-64. Substrate is bound at residue Ser-192. NAD(+)-binding residues include Tyr-205, Lys-209, and Thr-240. The active-site Proton acceptor is the Tyr-205.

The protein belongs to the short-chain dehydrogenases/reductases (SDR) family.

Its subcellular location is the endoplasmic reticulum membrane. Functionally, putative oxidoreductase. The polypeptide is Dehydrogenase/reductase SDR family member 7B (Mus musculus (Mouse)).